The chain runs to 99 residues: UPF0122 protein UU142 (99 aa).

Belongs to the UPF0122 family.

Might take part in the signal recognition particle (SRP) pathway. This is inferred from the conservation of its genetic proximity to ftsY/ffh. May be a regulatory protein. The protein is UPF0122 protein UU142 of Ureaplasma parvum serovar 3 (strain ATCC 700970).